Here is a 241-residue protein sequence, read N- to C-terminus: MASNPPSAASPRRTAVSPGADRPDGPDPAGQRQSYHAGRLEPEQLATTWVEQFARWFADASTAGAGVPEANAAVFATASADGRPSARTVLLKGFDHRGFVIYTNYTSRKGRESAENPFGSLVFPWYTLERQVVAIGAVERVSRTETEQYFASRPRGSQLGAWASHQSQIIESRDVLDARAAELAARWPAGTPVPTPPFWGGLRLVPDTVEFWQGRTNRLHDRLRYRRVCTADRWAVERLSP.

The segment at 1-35 (MASNPPSAASPRRTAVSPGADRPDGPDPAGQRQSY) is disordered. Residues 32–35 (RQSY) and Lys92 contribute to the substrate site. FMN is bound by residues 87–92 (RTVLLK), 102–103 (YT), Arg108, Lys109, and Gln131. 3 residues coordinate substrate: Tyr149, Arg153, and Ser157. Residues 166-167 (QS) and Trp212 contribute to the FMN site. 218-220 (RLH) provides a ligand contact to substrate. Residue Arg222 coordinates FMN.

It belongs to the pyridoxamine 5'-phosphate oxidase family. Homodimer. Requires FMN as cofactor.

The enzyme catalyses pyridoxamine 5'-phosphate + O2 + H2O = pyridoxal 5'-phosphate + H2O2 + NH4(+). The catalysed reaction is pyridoxine 5'-phosphate + O2 = pyridoxal 5'-phosphate + H2O2. It participates in cofactor metabolism; pyridoxal 5'-phosphate salvage; pyridoxal 5'-phosphate from pyridoxamine 5'-phosphate: step 1/1. The protein operates within cofactor metabolism; pyridoxal 5'-phosphate salvage; pyridoxal 5'-phosphate from pyridoxine 5'-phosphate: step 1/1. Functionally, catalyzes the oxidation of either pyridoxine 5'-phosphate (PNP) or pyridoxamine 5'-phosphate (PMP) into pyridoxal 5'-phosphate (PLP). The sequence is that of Pyridoxine/pyridoxamine 5'-phosphate oxidase from Frankia alni (strain DSM 45986 / CECT 9034 / ACN14a).